Consider the following 153-residue polypeptide: 3-hydroxyacyl-[acyl-carrier-protein] dehydratase FabZ (153 aa).

Histidine 54 is an active-site residue.

The protein belongs to the thioester dehydratase family. FabZ subfamily.

The protein resides in the cytoplasm. It carries out the reaction a (3R)-hydroxyacyl-[ACP] = a (2E)-enoyl-[ACP] + H2O. Its function is as follows. Involved in unsaturated fatty acids biosynthesis. Catalyzes the dehydration of short chain beta-hydroxyacyl-ACPs and long chain saturated and unsaturated beta-hydroxyacyl-ACPs. In Shewanella denitrificans (strain OS217 / ATCC BAA-1090 / DSM 15013), this protein is 3-hydroxyacyl-[acyl-carrier-protein] dehydratase FabZ.